The following is a 503-amino-acid chain: Glutamate--tRNA ligase (503 aa).

The short motif at 15-25 is the 'HIGH' region element; that stretch reads PSPTGHLHVGG. Positions 262–266 match the 'KMSKS' region motif; that stretch reads KLSKR. ATP is bound at residue Lys-265.

This sequence belongs to the class-I aminoacyl-tRNA synthetase family. Glutamate--tRNA ligase type 1 subfamily. In terms of assembly, monomer.

The protein resides in the cytoplasm. The catalysed reaction is tRNA(Glu) + L-glutamate + ATP = L-glutamyl-tRNA(Glu) + AMP + diphosphate. Its function is as follows. Catalyzes the attachment of glutamate to tRNA(Glu) in a two-step reaction: glutamate is first activated by ATP to form Glu-AMP and then transferred to the acceptor end of tRNA(Glu). This chain is Glutamate--tRNA ligase, found in Chlorobium phaeobacteroides (strain BS1).